The sequence spans 396 residues: Subtilisin-like protease 5 (396 aa).

Positions 1 to 20 (MTGFLTILSLSLAALSVTNA) are cleaved as a signal peptide. The propeptide occupies 21–116 (AQILSVPQGA…VEPDAIIKQH (96 aa)). An Inhibitor I9 domain is found at 37–114 (YIVVMKDDTS…AFVEPDAIIK (78 aa)). Positions 125–396 (PWGLSRLSNR…SRLLYNGSGR (272 aa)) constitute a Peptidase S8 domain. Active-site charge relay system residues include D156 and H187. N-linked (GlcNAc...) asparagine glycans are attached at residues N230 and N248. The active-site Charge relay system is the S342. The interval 376–396 (PTIRNPGPDTTSRLLYNGSGR) is disordered. N392 is a glycosylation site (N-linked (GlcNAc...) asparagine).

It belongs to the peptidase S8 family.

The protein localises to the secreted. Secreted subtilisin-like serine protease with keratinolytic activity that contributes to pathogenicity. The chain is Subtilisin-like protease 5 (SUB5) from Arthroderma gypseum (strain ATCC MYA-4604 / CBS 118893) (Microsporum gypseum).